The sequence spans 201 residues: Potassium-transporting ATPase KdpC subunit (201 aa).

Residues 7–29 (PALVLLTALTAITGLAYPLAMTG) form a helical membrane-spanning segment.

The protein belongs to the KdpC family. As to quaternary structure, the system is composed of three essential subunits: KdpA, KdpB and KdpC.

It is found in the cell inner membrane. Its function is as follows. Part of the high-affinity ATP-driven potassium transport (or Kdp) system, which catalyzes the hydrolysis of ATP coupled with the electrogenic transport of potassium into the cytoplasm. This subunit acts as a catalytic chaperone that increases the ATP-binding affinity of the ATP-hydrolyzing subunit KdpB by the formation of a transient KdpB/KdpC/ATP ternary complex. This chain is Potassium-transporting ATPase KdpC subunit, found in Methylorubrum populi (strain ATCC BAA-705 / NCIMB 13946 / BJ001) (Methylobacterium populi).